The following is a 326-amino-acid chain: MNIDCLCRWVVLPLLRYPLLVALVLRWSLSDSISICLTIYTLLINAFLIANSYIKRSGQVAWKSLREFKNGIVLITGGSKGLGRAIVSQLLQDYSNLTILNVDICPSSVRNTRVKDLICDLSDDEEVAALLNLLKRKYKNEIRLIVNNAGVRANFTGFNGMERDNLDKIFKINTFAPLQFIQELAPSRHSTRQCYIVNIASILGILTPAKVAAYAASKAALIAFHQSYSFELQNEGVRNIRTLLVTPGQLNTEMFAGFKPPRQFFAPVIDITTLAAKIVRYCELGQRGQLNEPFYCSFAHLLMCVPYSLQRIVRSFSRIDCCLPDE.

A run of 2 helical transmembrane segments spans residues 9–29 and 33–53; these read WVVLPLLRYPLLVALVLRWSL and ISICLTIYTLLINAFLIANSY. Aspartate 120, asparagine 148, tyrosine 214, lysine 218, and threonine 252 together coordinate NADP(+). Residue tyrosine 214 is the Proton acceptor of the active site. The active-site Lowers pKa of active site Tyr is the lysine 218.

This sequence belongs to the short-chain dehydrogenases/reductases (SDR) family.

The protein resides in the mitochondrion membrane. In terms of biological role, involved in the resistance to DNA-damaging agents. This is an uncharacterized protein from Saccharomyces cerevisiae (strain ATCC 204508 / S288c) (Baker's yeast).